The sequence spans 343 residues: tRNA N6-adenosine threonylcarbamoyltransferase (343 aa).

Positions 114 and 118 each coordinate Fe cation. Residues 137–141 (LVSGG), Asp-171, Gly-184, Asp-188, and Asn-278 contribute to the substrate site. Asp-306 serves as a coordination point for Fe cation.

This sequence belongs to the KAE1 / TsaD family. The cofactor is Fe(2+).

Its subcellular location is the cytoplasm. It carries out the reaction L-threonylcarbamoyladenylate + adenosine(37) in tRNA = N(6)-L-threonylcarbamoyladenosine(37) in tRNA + AMP + H(+). Its function is as follows. Required for the formation of a threonylcarbamoyl group on adenosine at position 37 (t(6)A37) in tRNAs that read codons beginning with adenine. Is involved in the transfer of the threonylcarbamoyl moiety of threonylcarbamoyl-AMP (TC-AMP) to the N6 group of A37, together with TsaE and TsaB. TsaD likely plays a direct catalytic role in this reaction. In Acidothermus cellulolyticus (strain ATCC 43068 / DSM 8971 / 11B), this protein is tRNA N6-adenosine threonylcarbamoyltransferase.